The sequence spans 452 residues: Protein FAM81B (452 aa).

Polar residues-rich tracts occupy residues 1–11 (MQLQFLGTLAS) and 38–55 (IMSS…TATA). Residues 1 to 85 (MQLQFLGTLA…KVRLSPAKMS (85 aa)) are disordered. Coiled-coil stretches lie at residues 164-192 (IQTI…DQAA) and 329-452 (LGHI…LQEV).

It belongs to the FAM81 family.

The protein is Protein FAM81B (FAM81B) of Homo sapiens (Human).